We begin with the raw amino-acid sequence, 462 residues long: GTPase HflX (462 aa).

The 198-residue stretch at 255–452 (PAVGIVGYTN…LLEEKIYNLP (198 aa)) folds into the Hflx-type G domain. GTP-binding positions include 261-268 (GYTNAGKS), 286-290 (FATLD), 308-311 (DTVG), 374-377 (NKID), and 430-432 (SAY). Residues Ser268 and Thr288 each contribute to the Mg(2+) site.

It belongs to the TRAFAC class OBG-HflX-like GTPase superfamily. HflX GTPase family. Monomer. Associates with the 50S ribosomal subunit. The cofactor is Mg(2+).

The protein resides in the cytoplasm. Its function is as follows. GTPase that associates with the 50S ribosomal subunit and may have a role during protein synthesis or ribosome biogenesis. The polypeptide is GTPase HflX (Leptospira borgpetersenii serovar Hardjo-bovis (strain JB197)).